Reading from the N-terminus, the 217-residue chain is CXXC-type zinc finger protein 4 (217 aa).

A disordered region spans residues Met-1–Gln-20. The segment at Ala-122–Glu-163 adopts a CXXC-type zinc-finger fold. Zn(2+) contacts are provided by Cys-129, Cys-132, Cys-135, Cys-141, Cys-144, Cys-147, Cys-157, and Cys-162.

It localises to the cytoplasm. In terms of biological role, acts as a negative regulator of the Wnt signaling pathway required for anterior neural structure formation. Ectopic expression induces ventralization. Binds preferentially to DNA containing cytidine-phosphate-guanosine (CpG) dinucleotides over CpH (H=A, T, and C), hemimethylated-CpG and hemimethylated-hydroxymethyl-CpG. The chain is CXXC-type zinc finger protein 4 (cxxc4) from Xenopus laevis (African clawed frog).